The primary structure comprises 600 residues: tRNA(Ile)-lysidine synthase, chloroplastic (600 aa).

An ATP-binding site is contributed by 35-40; it reads SGGQDS.

This sequence belongs to the tRNA(Ile)-lysidine synthase family.

The protein resides in the plastid. The protein localises to the chloroplast. The catalysed reaction is cytidine(34) in tRNA(Ile2) + L-lysine + ATP = lysidine(34) in tRNA(Ile2) + AMP + diphosphate + H(+). Its function is as follows. Ligates lysine onto the cytidine present at position 34 of the AUA codon-specific tRNA(Ile) that contains the anticodon CAU, in an ATP-dependent manner. Cytidine is converted to lysidine, thus changing the amino acid specificity of the tRNA from methionine to isoleucine. This Tupiella akineta (Green alga) protein is tRNA(Ile)-lysidine synthase, chloroplastic.